We begin with the raw amino-acid sequence, 436 residues long: UDP-N-acetylmuramate--L-alanine ligase (436 aa).

Gly-110–Ser-116 contacts ATP.

It belongs to the MurCDEF family.

The protein localises to the cytoplasm. The enzyme catalyses UDP-N-acetyl-alpha-D-muramate + L-alanine + ATP = UDP-N-acetyl-alpha-D-muramoyl-L-alanine + ADP + phosphate + H(+). Its pathway is cell wall biogenesis; peptidoglycan biosynthesis. Cell wall formation. The polypeptide is UDP-N-acetylmuramate--L-alanine ligase (Lacticaseibacillus paracasei (strain ATCC 334 / BCRC 17002 / CCUG 31169 / CIP 107868 / KCTC 3260 / NRRL B-441) (Lactobacillus paracasei)).